A 308-amino-acid chain; its full sequence is MARTDDDSWDLATGVGATATLVAAGRARAARAAQPLIDDPFAEPLVRAVGVEFLTRWATGELDAADVDDPDAAWGLQRMTTELVVRTRYFDQFFLDAAAAGVRQAVILASGLDARGYRLPWPADTTVFEVDQPRVLEFKAQTLAGLGAQPTADLRMVPADLRHDWPDALRRGGFDAAEPAAWIAEGLFGYLPPDAQNRLLDHVTDLSAPGSRLALEAFLGSADRDSARVEEMIRTATRGWREHGFHLDIWALNYAGPRHEVSGYLDNHGWRSVGTTTAQLLAAHDLPAAPALPAGLADRPNYWTCVLG.

S-adenosyl-L-methionine is bound by residues D131 and 160-161 (DL).

This sequence belongs to the UPF0677 family.

In terms of biological role, exhibits S-adenosyl-L-methionine-dependent methyltransferase activity. The chain is Putative S-adenosyl-L-methionine-dependent methyltransferase Mb3816c from Mycobacterium bovis (strain ATCC BAA-935 / AF2122/97).